Here is a 324-residue protein sequence, read N- to C-terminus: NAD kinase (324 aa).

Asp-89 acts as the Proton acceptor in catalysis. Residues 89–90, Arg-94, 163–164, Asp-193, and 204–209 contribute to the NAD(+) site; these read DG, NE, and TAYAFS.

Belongs to the NAD kinase family. A divalent metal cation serves as cofactor.

It localises to the cytoplasm. The catalysed reaction is NAD(+) + ATP = ADP + NADP(+) + H(+). Involved in the regulation of the intracellular balance of NAD and NADP, and is a key enzyme in the biosynthesis of NADP. Catalyzes specifically the phosphorylation on 2'-hydroxyl of the adenosine moiety of NAD to yield NADP. This is NAD kinase from Nocardia farcinica (strain IFM 10152).